The primary structure comprises 95 residues: MSRVCELTGVSVQSGHNVSHSQRKTKRKFLPNLQNVSLFSDSLKKAFKFKVVARAMRTLDKVGGLDCYLLSASDKTLSKSAIEVKKIIKNNESKS.

This sequence belongs to the bacterial ribosomal protein bL28 family.

In Orientia tsutsugamushi (strain Ikeda) (Rickettsia tsutsugamushi), this protein is Large ribosomal subunit protein bL28.